The following is a 205-amino-acid chain: Pyridoxine/pyridoxamine 5'-phosphate oxidase (205 aa).

Residues 53 to 58 (RMVLLK), 68 to 69 (YT), lysine 75, and glutamine 97 contribute to the FMN site. Residue lysine 58 participates in substrate binding. Residues tyrosine 115, arginine 119, and serine 123 each coordinate substrate. Residues 132–133 (QS) and tryptophan 177 each bind FMN. Residue 183 to 185 (RLH) coordinates substrate. Arginine 187 is an FMN binding site.

Belongs to the pyridoxamine 5'-phosphate oxidase family. As to quaternary structure, homodimer. FMN is required as a cofactor.

It catalyses the reaction pyridoxamine 5'-phosphate + O2 + H2O = pyridoxal 5'-phosphate + H2O2 + NH4(+). It carries out the reaction pyridoxine 5'-phosphate + O2 = pyridoxal 5'-phosphate + H2O2. The protein operates within cofactor metabolism; pyridoxal 5'-phosphate salvage; pyridoxal 5'-phosphate from pyridoxamine 5'-phosphate: step 1/1. Its pathway is cofactor metabolism; pyridoxal 5'-phosphate salvage; pyridoxal 5'-phosphate from pyridoxine 5'-phosphate: step 1/1. Its function is as follows. Catalyzes the oxidation of either pyridoxine 5'-phosphate (PNP) or pyridoxamine 5'-phosphate (PMP) into pyridoxal 5'-phosphate (PLP). In Mesorhizobium japonicum (strain LMG 29417 / CECT 9101 / MAFF 303099) (Mesorhizobium loti (strain MAFF 303099)), this protein is Pyridoxine/pyridoxamine 5'-phosphate oxidase.